A 601-amino-acid chain; its full sequence is Glutamine--fructose-6-phosphate aminotransferase [isomerizing] (601 aa).

C2 acts as the Nucleophile; for GATase activity in catalysis. In terms of domain architecture, Glutamine amidotransferase type-2 spans 2–216 (CGIVGYIGTN…DKEIVIVTKD (215 aa)). 2 consecutive SIS domains span residues 282-421 (IIDE…EIGD) and 453-591 (IAGE…VDKP). K596 serves as the catalytic For Fru-6P isomerization activity.

Homodimer.

The protein resides in the cytoplasm. It catalyses the reaction D-fructose 6-phosphate + L-glutamine = D-glucosamine 6-phosphate + L-glutamate. Its function is as follows. Catalyzes the first step in hexosamine metabolism, converting fructose-6P into glucosamine-6P using glutamine as a nitrogen source. The sequence is that of Glutamine--fructose-6-phosphate aminotransferase [isomerizing] from Listeria monocytogenes serovar 1/2a (strain ATCC BAA-679 / EGD-e).